The primary structure comprises 274 residues: Dermonecrotic toxin SdSicTox-betaIIB1bxii (274 aa).

Histidine 5 is a catalytic residue. The Mg(2+) site is built by glutamate 25 and aspartate 27. The active-site Nucleophile is the histidine 41. Intrachain disulfides connect cysteine 45–cysteine 51 and cysteine 47–cysteine 190. Aspartate 85 serves as a coordination point for Mg(2+).

This sequence belongs to the arthropod phospholipase D family. Class II subfamily. Mg(2+) serves as cofactor. In terms of tissue distribution, expressed by the venom gland.

It is found in the secreted. The catalysed reaction is an N-(acyl)-sphingosylphosphocholine = an N-(acyl)-sphingosyl-1,3-cyclic phosphate + choline. It catalyses the reaction an N-(acyl)-sphingosylphosphoethanolamine = an N-(acyl)-sphingosyl-1,3-cyclic phosphate + ethanolamine. It carries out the reaction a 1-acyl-sn-glycero-3-phosphocholine = a 1-acyl-sn-glycero-2,3-cyclic phosphate + choline. The enzyme catalyses a 1-acyl-sn-glycero-3-phosphoethanolamine = a 1-acyl-sn-glycero-2,3-cyclic phosphate + ethanolamine. Functionally, dermonecrotic toxins cleave the phosphodiester linkage between the phosphate and headgroup of certain phospholipids (sphingolipid and lysolipid substrates), forming an alcohol (often choline) and a cyclic phosphate. This toxin acts on sphingomyelin (SM). It may also act on ceramide phosphoethanolamine (CPE), lysophosphatidylcholine (LPC) and lysophosphatidylethanolamine (LPE), but not on lysophosphatidylserine (LPS), and lysophosphatidylglycerol (LPG). It acts by transphosphatidylation, releasing exclusively cyclic phosphate products as second products. Induces dermonecrosis, hemolysis, increased vascular permeability, edema, inflammatory response, and platelet aggregation. The chain is Dermonecrotic toxin SdSicTox-betaIIB1bxii from Sicarius cf. damarensis (strain GJB-2008) (Six-eyed sand spider).